A 318-amino-acid polypeptide reads, in one-letter code: S-adenosylmethionine/S-adenosylhomocysteine transporter (318 aa).

The next 10 helical transmembrane spans lie at Phe-7–Trp-27, Leu-44–Phe-64, Val-76–Ile-96, Lys-105–Leu-125, Leu-134–Glu-154, Leu-163–Leu-183, Ser-193–Ala-213, Leu-231–Phe-251, Phe-262–Leu-282, and Ser-285–Tyr-305. The 124-residue stretch at Phe-25–Leu-148 folds into the EamA 1 domain. One can recognise an EamA 2 domain in the interval Cys-191–Ile-304.

This sequence belongs to the drug/metabolite transporter (DMT) superfamily. 10 TMS drug/metabolite exporter (DME) (TC 2.A.7.3) family.

The protein localises to the cell membrane. In terms of biological role, transports S-adenosylmethionine (SAM) and S-adenosylhomocysteine (SAH). Allows bacteria to acquire SAM from the eukaryotic host cell and to likely remove the toxic by-product SAH. The protein is S-adenosylmethionine/S-adenosylhomocysteine transporter of Chlamydia muridarum (strain MoPn / Nigg).